Consider the following 162-residue polypeptide: Ribose-5-phosphate isomerase B (162 aa).

D-ribulose 5-phosphate-binding positions include 11–12 (DH) and 70–74 (GSGNG). E75 functions as the Proton acceptor in the catalytic mechanism. H102 functions as the Proton donor in the catalytic mechanism. D-ribulose 5-phosphate contacts are provided by N103, R113, R137, and R141.

This sequence belongs to the LacAB/RpiB family. Homodimer.

The catalysed reaction is aldehydo-D-ribose 5-phosphate = D-ribulose 5-phosphate. The protein operates within carbohydrate degradation; pentose phosphate pathway; D-ribose 5-phosphate from D-ribulose 5-phosphate (non-oxidative stage): step 1/1. Functionally, catalyzes the interconversion of ribulose-5-P and ribose-5-P. The chain is Ribose-5-phosphate isomerase B from Mycobacterium leprae (strain TN).